The chain runs to 1119 residues: DISARM protein DrmA (1119 aa).

The interval 73 to 95 is disordered; the sequence is PESGMEEDVEQQRNSELEQEAEE. The Helicase C-terminal domain occupies 813 to 986; it reads ELSKYIDPYR…ATPYASRARD (174 aa).

Belongs to the helicase family.

Its subcellular location is the cytoplasm. Its function is as follows. Component of antiviral defense system DISARM (defense island system associated with restriction-modification), composed of DrmE, DrmA, DrmB, DrmC and DrmMII. DISARM is probably a multi-gene restriction module, this subunit is probably a helicase. Expression of DISARM in B.subtilis (strain BEST7003) confers resistance to phages Nf, phi29, phi105, phi3T, SPO1, SPR and SPP1. Protection is over 10(7)-fold against phi3T, 10(4)-10(5)-fold against Nf, phi29, phi105 and SPR, 100-fold against SPO1 and 10-fold against SPP1. DISARM does not interfere with phage adsorption, but instead interferes with (phi3T) DNA replication early in its cycle, preventing replication, circularization and lysogeny and probably causes phage DNA degradation (DNA is degraded in SPP1-infected cells). This is DISARM protein DrmA from Bacillus paralicheniformis (strain ATCC 9945a / NCIMB 11709 / CD-2).